The following is an 808-amino-acid chain: MSEFEEKLNESSYGADSIKVLKGLEAVRKRPGMYIGDVGDGSGLHHMIYEVVDNAIDEALAGYCDLVRVVLNKNGSVTVSDNGRGIPVEIHEEEGISAAEVIMTQLHAGGKFDQNSYKVSGGLHGVGVSVVNALSDWLELRIWRNNTEHLIRFNNGITEAPLAVVKENVDKKGTEVTFFPSVETFTNIEFDFSIIEHRLRELAFLNSGVKILLTDNRFEEVKEVEFYYTGGIEAYVKYLDRAKHAVHSCIVVNADNTESGISLELAMHWNDSYHENILCFTNNIRQRDGGTHLSAFKSGLTRVITAYLENTGLNKKAKNAFSGEDTREGICCVLSVKVPDPKFSSQTKDKLVSSEVRPIVENAVYTKVLEWFEEHPADAKLIINKIMEAANAREAARKARELTRRKSVLEVSNLPGKLADCHAKDPAVSELFIVEGDSAGGTAKQGRDSKIQAILPLRGKILNVERARFDKMLGSDQIGTLITALGTGVDNREFSLEKLRYHKVIIMTDADVDGSHIRTLLLTFFYRHMPELINKGYLYIAQPPLYKVKKGASELYLKNEQALQDYLVKSAISDATLTLDNKEQLTNENLEELMSKVIKFNSLLDHASKKFNRSITEILAINDLLNNKIFDNESDSRLKKALNALNSLEQSPDKTDWEVLKHENKIEFFRFSRGLKERKILLREQLESFEFINISKLALTIFDVFNKQLKLVVKNQEFDILTPSILLNTIIECGKKGISVQRFKGLGEMNSDQLWDTTLDPKKRTLMQVRVAEVDEAEGIFSTLMGDVVEPRRQFIQSNALNVVNLDV.

Residues 429–544 (SELFIVEGDS…KGYLYIAQPP (116 aa)) enclose the Toprim domain. Mg(2+) is bound by residues Glu435, Asp509, and Asp511.

Belongs to the type II topoisomerase GyrB family. Heterotetramer, composed of two GyrA and two GyrB chains. In the heterotetramer, GyrA contains the active site tyrosine that forms a transient covalent intermediate with DNA, while GyrB binds cofactors and catalyzes ATP hydrolysis. Mg(2+) serves as cofactor. Requires Mn(2+) as cofactor. Ca(2+) is required as a cofactor.

The protein localises to the cytoplasm. It carries out the reaction ATP-dependent breakage, passage and rejoining of double-stranded DNA.. A type II topoisomerase that negatively supercoils closed circular double-stranded (ds) DNA in an ATP-dependent manner to modulate DNA topology and maintain chromosomes in an underwound state. Negative supercoiling favors strand separation, and DNA replication, transcription, recombination and repair, all of which involve strand separation. Also able to catalyze the interconversion of other topological isomers of dsDNA rings, including catenanes and knotted rings. Type II topoisomerases break and join 2 DNA strands simultaneously in an ATP-dependent manner. This chain is DNA gyrase subunit B, found in Rickettsia bellii (strain RML369-C).